The following is a 477-amino-acid chain: Lactate utilization protein B (477 aa).

4Fe-4S ferredoxin-type domains are found at residues 304-334 and 353-382; these read GTQF…GHSY and YDTY…LHDL. C313, C316, C319, C323, C366, C369, and C373 together coordinate [4Fe-4S] cluster. The interval 443–463 is disordered; the sequence is GPKPLQAWTNSRDFPMPDDEN.

This sequence belongs to the LutB/YkgF family.

In terms of biological role, is involved in L-lactate degradation and allows cells to grow with lactate as the sole carbon source. Has probably a role as an electron transporter during oxidation of L-lactate. This is Lactate utilization protein B from Macrococcus caseolyticus (strain JCSC5402) (Macrococcoides caseolyticum).